Here is a 79-residue protein sequence, read N- to C-terminus: Translational regulator CsrA (79 aa).

The protein belongs to the CsrA/RsmA family. Homodimer; the beta-strands of each monomer intercalate to form a hydrophobic core, while the alpha-helices form wings that extend away from the core.

It is found in the cytoplasm. In terms of biological role, a translational regulator that binds mRNA to regulate translation initiation and/or mRNA stability. Usually binds in the 5'-UTR at or near the Shine-Dalgarno sequence preventing ribosome-binding, thus repressing translation. Its main target seems to be the major flagellin gene, while its function is anatagonized by FliW. The chain is Translational regulator CsrA from Helicobacter hepaticus (strain ATCC 51449 / 3B1).